The sequence spans 183 residues: Isopentenyl-diphosphate Delta-isomerase (183 aa).

The Mn(2+) site is built by His-26 and His-33. One can recognise a Nudix hydrolase domain in the interval 31–169; the sequence is PLHFAFSCYV…PFAFSPWMVE (139 aa). The active site involves Cys-68. Mg(2+) is bound at residue Cys-68. Mn(2+) is bound at residue His-70. Glu-88 lines the Mg(2+) pocket. Mn(2+) contacts are provided by Glu-118 and Glu-120. Residue Glu-120 is part of the active site.

The protein belongs to the IPP isomerase type 1 family. It depends on Mg(2+) as a cofactor. Mn(2+) is required as a cofactor.

The protein localises to the cytoplasm. It carries out the reaction isopentenyl diphosphate = dimethylallyl diphosphate. Its pathway is isoprenoid biosynthesis; dimethylallyl diphosphate biosynthesis; dimethylallyl diphosphate from isopentenyl diphosphate: step 1/1. Its function is as follows. Catalyzes the 1,3-allylic rearrangement of the homoallylic substrate isopentenyl (IPP) to its highly electrophilic allylic isomer, dimethylallyl diphosphate (DMAPP). This is Isopentenyl-diphosphate Delta-isomerase from Corynebacterium diphtheriae (strain ATCC 700971 / NCTC 13129 / Biotype gravis).